We begin with the raw amino-acid sequence, 121 residues long: Large ribosomal subunit protein uL22 (121 aa).

Belongs to the universal ribosomal protein uL22 family. As to quaternary structure, part of the 50S ribosomal subunit.

Functionally, this protein binds specifically to 23S rRNA; its binding is stimulated by other ribosomal proteins, e.g. L4, L17, and L20. It is important during the early stages of 50S assembly. It makes multiple contacts with different domains of the 23S rRNA in the assembled 50S subunit and ribosome. In terms of biological role, the globular domain of the protein is located near the polypeptide exit tunnel on the outside of the subunit, while an extended beta-hairpin is found that lines the wall of the exit tunnel in the center of the 70S ribosome. This is Large ribosomal subunit protein uL22 from Parasynechococcus marenigrum (strain WH8102).